A 259-amino-acid chain; its full sequence is Oxaloacetate tautomerase FMP41, mitochondrial (259 aa).

Glu87, Glu89, and Asp121 together coordinate Mg(2+).

The protein belongs to the FAH family. Requires Mg(2+) as cofactor. Mn(2+) serves as cofactor.

The protein localises to the mitochondrion. It catalyses the reaction oxaloacetate = enol-oxaloacetate. Tautomerase that converts enol-oxaloacetate, a strong inhibitor of succinate dehydrogenase, to the physiological keto form of oxaloacetate. The protein is Oxaloacetate tautomerase FMP41, mitochondrial of Saccharomyces cerevisiae (strain ATCC 204508 / S288c) (Baker's yeast).